The primary structure comprises 39 residues: Omega-actinopoditoxin-Mb1a (39 aa).

Intrachain disulfides connect C4/C19, C11/C30, and C18/C38.

Contains 3 disulfide bonds. In terms of tissue distribution, expressed by the venom gland.

It is found in the secreted. Potent inhibitor of insect, but not mammalian, voltage-gated calcium channels (Cav). This is Omega-actinopoditoxin-Mb1a from Missulena bradleyi (Eastern mouse spider).